Reading from the N-terminus, the 396-residue chain is Elongation factor Tu (396 aa).

Residues 10 to 205 form the tr-type G domain; sequence KPHVNIGTIG…ACDESIPDPV (196 aa). Residues 19-26 form a G1 region; sequence GHVDHGKT. 19 to 26 contributes to the GTP binding site; sequence GHVDHGKT. Thr26 is a Mg(2+) binding site. A G2 region spans residues 62 to 66; the sequence is GITIN. The G3 stretch occupies residues 83 to 86; the sequence is DAPG. Residues 83-87 and 138-141 each bind GTP; these read DAPGH and NKCD. Residues 138-141 are G4; that stretch reads NKCD. The interval 175 to 177 is G5; sequence SAL.

It belongs to the TRAFAC class translation factor GTPase superfamily. Classic translation factor GTPase family. EF-Tu/EF-1A subfamily. As to quaternary structure, monomer.

It localises to the cytoplasm. It catalyses the reaction GTP + H2O = GDP + phosphate + H(+). GTP hydrolase that promotes the GTP-dependent binding of aminoacyl-tRNA to the A-site of ribosomes during protein biosynthesis. In Corynebacterium kroppenstedtii (strain DSM 44385 / JCM 11950 / CIP 105744 / CCUG 35717), this protein is Elongation factor Tu.